A 525-amino-acid polypeptide reads, in one-letter code: Ribonuclease Y (525 aa).

The chain crosses the membrane as a helical span at residues 3–23 (IFFISLVLIVLASVVFFVGGF). The region spanning 215–300 (ALSVVHIQSD…KAYEDAKKEI (86 aa)) is the KH domain. In terms of domain architecture, HD spans 341–433 (LLQHSREVAM…VDAANVISLS (93 aa)).

This sequence belongs to the RNase Y family.

The protein resides in the cell membrane. In terms of biological role, endoribonuclease that initiates mRNA decay. The sequence is that of Ribonuclease Y from Chlorobium phaeobacteroides (strain DSM 266 / SMG 266 / 2430).